Consider the following 892-residue polypeptide: Alanine--tRNA ligase (892 aa).

Residues His-578, His-582, Cys-681, and His-685 each coordinate Zn(2+).

This sequence belongs to the class-II aminoacyl-tRNA synthetase family. The cofactor is Zn(2+).

It is found in the cytoplasm. It catalyses the reaction tRNA(Ala) + L-alanine + ATP = L-alanyl-tRNA(Ala) + AMP + diphosphate. In terms of biological role, catalyzes the attachment of alanine to tRNA(Ala) in a two-step reaction: alanine is first activated by ATP to form Ala-AMP and then transferred to the acceptor end of tRNA(Ala). Also edits incorrectly charged Ser-tRNA(Ala) and Gly-tRNA(Ala) via its editing domain. This Cutibacterium acnes (strain DSM 16379 / KPA171202) (Propionibacterium acnes) protein is Alanine--tRNA ligase.